The sequence spans 322 residues: Cytochrome c biogenesis protein CcsA (322 aa).

Helical transmembrane passes span 9–29 (ILTH…LITL), 43–63 (GMIA…IYSG), 70–90 (LYES…VPKI), 142–162 (MLLS…LLVI), 226–246 (VISL…VWAN), 259–274 (ETWA…IYSH), and 287–307 (AIVA…VNLL).

It belongs to the CcmF/CycK/Ccl1/NrfE/CcsA family. As to quaternary structure, may interact with Ccs1.

The protein localises to the plastid. The protein resides in the chloroplast thylakoid membrane. Required during biogenesis of c-type cytochromes (cytochrome c6 and cytochrome f) at the step of heme attachment. The chain is Cytochrome c biogenesis protein CcsA from Chloranthus spicatus (Chulantree).